The sequence spans 424 residues: Homeobox-containing protein 1 (424 aa).

Residues 1–30 (MLFTIEQLELIKKLQHTGMSSDQLLKAFGE) form the HNF-p1 domain. The POU-specific atypical domain occupies 103 to 199 (SQRTPMKEIT…PNKLAAFLAD (97 aa)). Positions 215 to 291 (QRRERYVFRP…NKRKELRRRS (77 aa)) form a DNA-binding region, homeobox. A disordered region spans residues 291 to 345 (SAEASAASTSSASSSASSTANHDSVSVSSMSPRDEETSSRNTTPETAISPSPAVS). Residues 293–310 (EASAASTSSASSSASSTA) show a composition bias toward low complexity. Composition is skewed to polar residues over residues 311–321 (NHDSVSVSSMS) and 329–345 (SRNT…PAVS).

The protein belongs to the HMBOX1 homeobox family. In terms of tissue distribution, expressed in both AWC neurons. Also expressed in the FLP mechanosensory neurons.

It is found in the nucleus. Transcriptional repressor which maintains cell fate asymmetry of AWC neurons in adults by repressing the expression of multiple AWC (OFF) genes, including srsx-3 in the AWC (ON) neuron. This Caenorhabditis elegans protein is Homeobox-containing protein 1.